The sequence spans 634 residues: Chaperone protein HtpG (634 aa).

Residues 1-343 are a; substrate-binding; that stretch reads MTEAENRVTL…SDSLPLNVSR (343 aa). Positions 344 to 560 are b; it reads EILQENKQLE…SYGMSRTMER (217 aa). The tract at residues 561-634 is c; the sequence is IMKSAGQNIP…KLNGLLQSLL (74 aa).

It belongs to the heat shock protein 90 family. In terms of assembly, homodimer.

The protein localises to the cytoplasm. Functionally, molecular chaperone. Has ATPase activity. This chain is Chaperone protein HtpG, found in Methylococcus capsulatus (strain ATCC 33009 / NCIMB 11132 / Bath).